The following is a 623-amino-acid chain: Glutamyl-tRNA(Gln) amidotransferase subunit E (623 aa).

Belongs to the GatB/GatE family. GatE subfamily. Heterodimer of GatD and GatE.

The catalysed reaction is L-glutamyl-tRNA(Gln) + L-glutamine + ATP + H2O = L-glutaminyl-tRNA(Gln) + L-glutamate + ADP + phosphate + H(+). Functionally, allows the formation of correctly charged Gln-tRNA(Gln) through the transamidation of misacylated Glu-tRNA(Gln) in organisms which lack glutaminyl-tRNA synthetase. The reaction takes place in the presence of glutamine and ATP through an activated gamma-phospho-Glu-tRNA(Gln). The GatDE system is specific for glutamate and does not act on aspartate. The chain is Glutamyl-tRNA(Gln) amidotransferase subunit E from Haloarcula marismortui (strain ATCC 43049 / DSM 3752 / JCM 8966 / VKM B-1809) (Halobacterium marismortui).